We begin with the raw amino-acid sequence, 154 residues long: Myoglobin (154 aa).

Residues 2–148 enclose the Globin domain; sequence GLSDGEWQLV…FRNDMAAKYK (147 aa). S4 carries the phosphoserine modification. H65 provides a ligand contact to nitrite. H65 is an O2 binding site. T68 bears the Phosphothreonine mark. H94 lines the heme b pocket.

Belongs to the globin family. In terms of assembly, monomeric.

The protein resides in the cytoplasm. It is found in the sarcoplasm. The catalysed reaction is Fe(III)-heme b-[protein] + nitric oxide + H2O = Fe(II)-heme b-[protein] + nitrite + 2 H(+). The enzyme catalyses H2O2 + AH2 = A + 2 H2O. Its function is as follows. Monomeric heme protein which primary function is to store oxygen and facilitate its diffusion within muscle tissues. Reversibly binds oxygen through a pentacoordinated heme iron and enables its timely and efficient release as needed during periods of heightened demand. Depending on the oxidative conditions of tissues and cells, and in addition to its ability to bind oxygen, it also has a nitrite reductase activity whereby it regulates the production of bioactive nitric oxide. Under stress conditions, like hypoxia and anoxia, it also protects cells against reactive oxygen species thanks to its pseudoperoxidase activity. In Saimiri sciureus (Common squirrel monkey), this protein is Myoglobin (MB).